The chain runs to 89 residues: Putative regulatory protein RBAM_015500 (89 aa).

This sequence belongs to the RemA family.

The chain is Putative regulatory protein RBAM_015500 from Bacillus velezensis (strain DSM 23117 / BGSC 10A6 / LMG 26770 / FZB42) (Bacillus amyloliquefaciens subsp. plantarum).